Here is a 332-residue protein sequence, read N- to C-terminus: FAD-dependent monooxygenase elcE (332 aa).

Belongs to the oxygen-dependent FAD-linked oxidoreductase family.

It functions in the pathway secondary metabolite biosynthesis. FAD-dependent monooxygenase; part of the gene cluster that mediates the biosynthesis of elsinochrome C, a perelyenequinone phytotoxin structurally similar to cercosporin. The first step of elsinochrome C biosynthesis is performed by the polyketide synthase elcA which catalyzes the formation of nor-toralactone. The starter unit acyltransferase (SAT) domain of elcA initiates polyketide extension by the selective utilization of acetyl-CoA, which is elongated to the heptaketide in the beta-ketoacyl synthase (KS) domain by successive condensations with six malonyl units introduced by the malonyl acyltransferase (MAT) domain. The product template (PT) domain catalyzes C4-C9 and C2-C11 aldol cyclizations and dehydrations to a trihydroxynaphthalene, which is thought to be delivered to the thioesterase (TE) domain for product release. The bifunctional enzyme elcB then methylates nor-toralactone to toralactone before conducting an unusual oxidative aromatic ring opening. The next step in perylenequinone biosynthesis is an O-methylation at the nascent OH-6 of the elcB product performed by the O-methyltransferase elcD. The oxidative coupling of the two monomeric naphthol units in perylenequinone biosynthesis is catalyzed by the FAD-dependent monooxygenase elcE and the multicopper oxidase elcG. ElcG might catalyze the first intermolecular coupling in a regio- and stereo-selective manner via a phenol radical coupling mechanism and the elcE could forge the second C-C bond intramolecularly via a hydride transfer mechanism. The fasciclin domain-containing protein elcF might also play a role duting this step. The last piece of the puzzle in the biosynthesis of elsinochrome C is the additional annulation by enolate coupling to afford the dihydrobenzo(ghi)perylenequinone system, catalyzed by the FAD-dependent monooxygenase elcH. The protein is FAD-dependent monooxygenase elcE of Phaeosphaeria nodorum (strain SN15 / ATCC MYA-4574 / FGSC 10173) (Glume blotch fungus).